Reading from the N-terminus, the 282-residue chain is HTH-type transcriptional activator RhaR (282 aa).

The region spanning 179-277 (DKLITRLAAS…GMTPSQWRHL (99 aa)) is the HTH araC/xylS-type domain. 2 DNA-binding regions (H-T-H motif) span residues 196-217 (DKFC…RQQT) and 244-267 (ISDI…TRET).

In terms of assembly, binds DNA as a dimer.

Its subcellular location is the cytoplasm. Functionally, activates expression of the rhaSR operon in response to L-rhamnose. The sequence is that of HTH-type transcriptional activator RhaR from Escherichia coli (strain K12 / MC4100 / BW2952).